A 376-amino-acid polypeptide reads, in one-letter code: Metal tolerance protein 6 (376 aa).

Residues 1-28 (MAAAAGVAAGTGRGSGEGEELLPNAVEG) are disordered. Over 1–123 (MAAAAGVAAG…CEKVARSEAL (123 aa)) the chain is Cytoplasmic. A helical transmembrane segment spans residues 124-144 (AIRLSNIANMVLFAAKVYASI). The Vacuolar segment spans residues 145–149 (RSGSL). The chain crosses the membrane as a helical span at residues 150-170 (AIIASTLDSLLDLLSGFILWF). The Cytoplasmic segment spans residues 171-191 (TAFSKKTSNPYRYPIGKRRMQ). A helical transmembrane segment spans residues 192–212 (PLGILVFASVMATLGLQIILE). Over 213–231 (STRSLFYDGDTFRLTKEQE) the chain is Vacuolar. A helical transmembrane segment spans residues 232–252 (KWVVDIMLSVTSVKLLLVVYC). The Cytoplasmic portion of the chain corresponds to 253–376 (RSFTNEILAI…PEHARSHDTL (124 aa)).

Belongs to the cation diffusion facilitator (CDF) transporter (TC 2.A.4) family. SLC30A subfamily.

Its subcellular location is the vacuole membrane. Its function is as follows. Involved in sequestration of excess metal in the cytoplasm into vacuoles to maintain metal homeostasis. The sequence is that of Metal tolerance protein 6 (MTP6) from Oryza sativa subsp. japonica (Rice).